Here is a 233-residue protein sequence, read N- to C-terminus: Nickel import system ATP-binding protein NikE (233 aa).

The 227-residue stretch at 2-228 (IELKHVTFGY…DRHPYTKELV (227 aa)) folds into the ABC transporter domain. Residue 35-42 (GESGCGKS) participates in ATP binding.

It belongs to the ABC transporter superfamily. The complex is composed of two ATP-binding proteins (NikD and NikE), two transmembrane proteins (NikB and NikC) and a solute-binding protein (NikA).

Its subcellular location is the cell membrane. It catalyses the reaction Ni(2+)(out) + ATP + H2O = Ni(2+)(in) + ADP + phosphate + H(+). In terms of biological role, part of the ABC transporter complex NikABCDE (Opp2) involved in nickel import. Probably responsible for energy coupling to the transport system. The protein is Nickel import system ATP-binding protein NikE of Staphylococcus aureus (strain USA300).